A 332-amino-acid polypeptide reads, in one-letter code: Ketol-acid reductoisomerase (NADP(+)) (332 aa).

The KARI N-terminal Rossmann domain occupies 1–182 (MAVIYYDKDC…GSNRAGILET (182 aa)). NADP(+)-binding positions include 25–28 (YGAQ) and 83–86 (DTSQ). H108 is a catalytic residue. An NADP(+)-binding site is contributed by G134. Residues 183–328 (TFAEETETDL…AELRSMMSWL (146 aa)) form the KARI C-terminal knotted domain. The Mg(2+) site is built by D191, E195, E227, and E231. S252 contributes to the substrate binding site.

The protein belongs to the ketol-acid reductoisomerase family. Requires Mg(2+) as cofactor.

The catalysed reaction is (2R)-2,3-dihydroxy-3-methylbutanoate + NADP(+) = (2S)-2-acetolactate + NADPH + H(+). It carries out the reaction (2R,3R)-2,3-dihydroxy-3-methylpentanoate + NADP(+) = (S)-2-ethyl-2-hydroxy-3-oxobutanoate + NADPH + H(+). It participates in amino-acid biosynthesis; L-isoleucine biosynthesis; L-isoleucine from 2-oxobutanoate: step 2/4. The protein operates within amino-acid biosynthesis; L-valine biosynthesis; L-valine from pyruvate: step 2/4. Involved in the biosynthesis of branched-chain amino acids (BCAA). Catalyzes an alkyl-migration followed by a ketol-acid reduction of (S)-2-acetolactate (S2AL) to yield (R)-2,3-dihydroxy-isovalerate. In the isomerase reaction, S2AL is rearranged via a Mg-dependent methyl migration to produce 3-hydroxy-3-methyl-2-ketobutyrate (HMKB). In the reductase reaction, this 2-ketoacid undergoes a metal-dependent reduction by NADPH to yield (R)-2,3-dihydroxy-isovalerate. The polypeptide is Ketol-acid reductoisomerase (NADP(+)) (Dehalococcoides mccartyi (strain CBDB1)).